Consider the following 452-residue polypeptide: MREILHIQGGQCGNQIGSKFWEVICDEHGVDPTGRYKGTAAESDLQLERINVYFNEASGGRYVPRAVLMDLEPGTMDSIRSGPYGQIFRPDNLVFGQSGAGNNWAKGHYTEGAELIDAVLDVVRKEAENCDCLQGFQVCHSLGGGTGSGMGTLLISKVREEYPDRMMLTFSVFPSPKVSDTVVEPYNATLSVHQLVENADECMVLDNEALYDICFRTLKLTTPSFGDLNHLISATMSGVTCCLRFPGQLNSDLRKLAVNLIPLPRLHFFMVGFAPLTSRGSQQYISLTVPELTQQMWDAKNMMCAADPRHGRYLTASAMFRGKMSTKEVDEQMINVQNKNSSYFVEWIPNNVKSSVCDIPPTGLKMASTFVGNSTSIQEMFRRVSEQFTAMFRRKAFLHWYTGEGMDEMEFTEAESNMNDPVAEYQQYQDATADDEEEYDDEAADDHHQYES.

Positions 11, 72, 141, 145, 146, 147, 207, and 229 each coordinate GTP. A Mg(2+)-binding site is contributed by Glu-72. The interval 414–452 (AESNMNDPVAEYQQYQDATADDEEEYDDEAADDHHQYES) is disordered. Over residues 432-444 (TADDEEEYDDEAA) the composition is skewed to acidic residues.

Belongs to the tubulin family. Dimer of alpha and beta chains. A typical microtubule is a hollow water-filled tube with an outer diameter of 25 nm and an inner diameter of 15 nM. Alpha-beta heterodimers associate head-to-tail to form protofilaments running lengthwise along the microtubule wall with the beta-tubulin subunit facing the microtubule plus end conferring a structural polarity. Microtubules usually have 13 protofilaments but different protofilament numbers can be found in some organisms and specialized cells. Mg(2+) is required as a cofactor.

Its subcellular location is the cytoplasm. The protein localises to the cytoskeleton. Tubulin is the major constituent of microtubules, a cylinder consisting of laterally associated linear protofilaments composed of alpha- and beta-tubulin heterodimers. Microtubules grow by the addition of GTP-tubulin dimers to the microtubule end, where a stabilizing cap forms. Below the cap, tubulin dimers are in GDP-bound state, owing to GTPase activity of alpha-tubulin. The sequence is that of Tubulin beta-2 chain (TUBB2) from Solanum tuberosum (Potato).